The chain runs to 238 residues: 1-(5-phosphoribosyl)-5-[(5-phosphoribosylamino)methylideneamino] imidazole-4-carboxamide isomerase (238 aa).

Catalysis depends on D7, which acts as the Proton acceptor. The active-site Proton donor is the D129.

Belongs to the HisA/HisF family.

It localises to the cytoplasm. The enzyme catalyses 1-(5-phospho-beta-D-ribosyl)-5-[(5-phospho-beta-D-ribosylamino)methylideneamino]imidazole-4-carboxamide = 5-[(5-phospho-1-deoxy-D-ribulos-1-ylimino)methylamino]-1-(5-phospho-beta-D-ribosyl)imidazole-4-carboxamide. It participates in amino-acid biosynthesis; L-histidine biosynthesis; L-histidine from 5-phospho-alpha-D-ribose 1-diphosphate: step 4/9. This Leuconostoc mesenteroides subsp. mesenteroides (strain ATCC 8293 / DSM 20343 / BCRC 11652 / CCM 1803 / JCM 6124 / NCDO 523 / NBRC 100496 / NCIMB 8023 / NCTC 12954 / NRRL B-1118 / 37Y) protein is 1-(5-phosphoribosyl)-5-[(5-phosphoribosylamino)methylideneamino] imidazole-4-carboxamide isomerase.